Here is a 399-residue protein sequence, read N- to C-terminus: MSKGKLGEKISQFKIVEELKAKGLYAYFRPIQSKQDTEVKIDGRRVLMFGSNSYLGLTTDTRIIKAAQDALEKYGTGCAGSRFLNGTLDIHVELEEKLSAYVGKEAAILFSTGFQSNLGPLSCLMGRNDYILLDERDHASIIDGSRLSFSKVIKYGHNNMEDLRAKLSRLPEDSAKLICTDGIFSMEGDIVNLPELTSIANEFDAAVMVDDAHSLGVIGHKGAGTASHFGLNDDVDLIMGTFSKSLASLGGFVAGDADVIDFLKHNARSVMFSASMTPASVASTLKALEIIQNEPEHIEKLWKNTDYAKAQLLDHGFDLGATESPILPIFIRSNEKTFWVTKMLQDDGVFVNPVVSPAVPAEESLIRFSLMATHTYDQIDEAIEKMVKVFKQAEVETLI.

Residues 113-114, H213, T241, and S243 contribute to the pyridoxal 5'-phosphate site; that span reads GF. K244 is modified (N6-(pyridoxal phosphate)lysine).

The protein belongs to the class-II pyridoxal-phosphate-dependent aminotransferase family. In terms of assembly, homodimer. Pyridoxal 5'-phosphate serves as cofactor.

It is found in the cytoplasm. It localises to the cell inner membrane. It catalyses the reaction L-serine + hexadecanoyl-CoA + H(+) = 3-oxosphinganine + CO2 + CoA. It participates in lipid metabolism; sphingolipid metabolism. In terms of biological role, catalyzes the condensation of L-serine with palmitoyl-CoA (hexadecanoyl-CoA) to produce 3-oxosphinganine. Exhibits a broad substrate specificity concerning the chain length and the degree of unsaturation of acyl-CoA. This Sphingobacterium multivorum protein is Serine palmitoyltransferase.